The primary structure comprises 569 residues: MSRSTRLDRVFYWLGLIVIAWAVLTFLLVPMLAALQAALFRLGSLAMFDAVSELARSRRVRAALWNTVWMTAATTLTVTIVGMFQVAVLEYFRVPGRGFLKIAFSTPLVFGGVVAAAGYNFTYGPSGAITAALAALFPSLPRDWFIGWFGVLFAHTFLMTSFHFLFLRAAMRRVDYSTIEAARSMGASEMTILRCVVLPVILPTVLAVTLLTLITAMGSFAAPQVLGGRDFHMLSQMVLTLNSLRRPDMAALLALLMGLVLMGLILLSQYFEAKGAYTAGAKATTRIQLRAIRNPLARIVVTALAYLLAAIYLMPVALIVLFSFAPASSIGIDVLPSSFTLANYARVLGGGAAFVPFFNSMLMSSIAVAVGLAITLFAVPIMVRKRNWLTRGLDICFVLPWIIPTMLLAVGLIVAFDAPNPLVGNLVLLGSYWLLPIGYVIFSLPLMVRFMRSAFIGIDPAFDEAARAMGASGPYRLRRVVLPLVAPTAILVAGMKFNNLLAEYPLSAFLYNVNNKPLPIAIVDGAVSADPDQAAVSLVYVTLIMAFSLAVILIAERLSLGRTPESSNL.

13 helical membrane passes run 10–30, 68–88, 98–118, 121–141, 145–165, 196–216, 247–267, 304–324, 363–383, 395–415, 426–446, 480–500, and 534–554; these read VFYW…LLVP, VWMT…QVAV, GFLK…AAAG, FTYG…PSLP, FIGW…FHFL, VVLP…LITA, PDMA…LILL, LAYL…LFSF, MSSI…PIMV, ICFV…LIVA, LVLL…SLPL, VVLP…FNNL, and AAVS…VILI. An ABC transmembrane type-1 1 domain is found at 64–268; it reads LWNTVWMTAA…LVLMGLILLS (205 aa). Residues 357–551 form the ABC transmembrane type-1 2 domain; the sequence is FFNSMLMSSI…TLIMAFSLAV (195 aa).

This sequence belongs to the binding-protein-dependent transport system permease family. CysTW subfamily.

Its subcellular location is the cell inner membrane. In terms of biological role, probably part of the binding-protein-dependent transport system y4fNOP. Probably responsible for the translocation of the substrate across the membrane. In Sinorhizobium fredii (strain NBRC 101917 / NGR234), this protein is Probable ABC transporter permease protein y4fN.